The chain runs to 108 residues: uncharacterized protein (108 aa).

The signal sequence occupies residues 1–24 (MNLWEFRFGKSFLFIPNFIMKVLA).

To M.jannaschii MJ0803.

This is an uncharacterized protein from Methanocaldococcus jannaschii (strain ATCC 43067 / DSM 2661 / JAL-1 / JCM 10045 / NBRC 100440) (Methanococcus jannaschii).